We begin with the raw amino-acid sequence, 185 residues long: MYSTTDFRKGLKIEIDGTPFEIVEFQHFKPGKGGAMVRTKLRNLLNDRMVDNTFRSGEKVGRPDMETREMQYLYREGDDLVFMDLTTYEQLHIAEDTTDGKAGFLKEAQQVRVLLYNGKPLDIDLPVSLVLEVTDTEPGAKGDTVSNVTKPATLETGIVIGVPIFVNIGDRVKVDTRTRDYLGRE.

This sequence belongs to the elongation factor P family.

The protein localises to the cytoplasm. The protein operates within protein biosynthesis; polypeptide chain elongation. Functionally, involved in peptide bond synthesis. Stimulates efficient translation and peptide-bond synthesis on native or reconstituted 70S ribosomes in vitro. Probably functions indirectly by altering the affinity of the ribosome for aminoacyl-tRNA, thus increasing their reactivity as acceptors for peptidyl transferase. This is Elongation factor P from Nitratidesulfovibrio vulgaris (strain DSM 19637 / Miyazaki F) (Desulfovibrio vulgaris).